A 246-amino-acid chain; its full sequence is Homeobox protein SIX6 (246 aa).

A DNA-binding region (homeobox) is located at residues 126–186; that stretch reads WDGEQKTHCF…KNRRQRDRAA (61 aa). Residues 190–246 are disordered; sequence NRLQQQVLSQGPGRVLRSEGEGTPEVLGVASSPAASLSSKAATSAISITSSDSECDI. Thr-212 carries the phosphothreonine modification. The span at 219 to 246 shows a compositional bias: low complexity; it reads ASSPAASLSSKAATSAISITSSDSECDI. Ser-221, Ser-225, Ser-227, and Ser-228 each carry phosphoserine.

This sequence belongs to the SIX/Sine oculis homeobox family. Interacts with TLE4 and TLE5. In the developing embryo, expressed mainly in the ventral optic stalk, optic chiasma, the neural retina and the primordial tissues that give rise to the pituitary/hypothalamus axis. Not expressed in the lens placode.

It localises to the nucleus. In terms of biological role, may be involved in eye development. The sequence is that of Homeobox protein SIX6 (Six6) from Mus musculus (Mouse).